We begin with the raw amino-acid sequence, 311 residues long: 1D-myo-inositol 2-acetamido-2-deoxy-alpha-D-glucopyranoside deacetylase (311 aa).

Residues histidine 29, aspartate 32, and histidine 162 each contribute to the Zn(2+) site.

Belongs to the MshB deacetylase family. Zn(2+) is required as a cofactor.

It carries out the reaction 1D-myo-inositol 2-acetamido-2-deoxy-alpha-D-glucopyranoside + H2O = 1D-myo-inositol 2-amino-2-deoxy-alpha-D-glucopyranoside + acetate. In terms of biological role, catalyzes the deacetylation of 1D-myo-inositol 2-acetamido-2-deoxy-alpha-D-glucopyranoside (GlcNAc-Ins) in the mycothiol biosynthesis pathway. In Corynebacterium efficiens (strain DSM 44549 / YS-314 / AJ 12310 / JCM 11189 / NBRC 100395), this protein is 1D-myo-inositol 2-acetamido-2-deoxy-alpha-D-glucopyranoside deacetylase.